A 635-amino-acid polypeptide reads, in one-letter code: Threonine--tRNA ligase (635 aa).

The region spanning 1-61 is the TGS domain; the sequence is MIKITLKDGS…KEDAALELLT (61 aa). A catalytic region spans residues 242 to 532; it reads DHRKLGQELD…LTEHFAGAFP (291 aa). Residues Cys333, His384, and His509 each coordinate Zn(2+).

This sequence belongs to the class-II aminoacyl-tRNA synthetase family. As to quaternary structure, homodimer. It depends on Zn(2+) as a cofactor.

It localises to the cytoplasm. It carries out the reaction tRNA(Thr) + L-threonine + ATP = L-threonyl-tRNA(Thr) + AMP + diphosphate + H(+). Functionally, catalyzes the attachment of threonine to tRNA(Thr) in a two-step reaction: L-threonine is first activated by ATP to form Thr-AMP and then transferred to the acceptor end of tRNA(Thr). Also edits incorrectly charged L-seryl-tRNA(Thr). In Desulforamulus reducens (strain ATCC BAA-1160 / DSM 100696 / MI-1) (Desulfotomaculum reducens), this protein is Threonine--tRNA ligase.